A 471-amino-acid polypeptide reads, in one-letter code: ATP synthase subunit beta 2 (471 aa).

157-164 (GGAGVGKT) serves as a coordination point for ATP.

The protein belongs to the ATPase alpha/beta chains family. F-type ATPases have 2 components, CF(1) - the catalytic core - and CF(0) - the membrane proton channel. CF(1) has five subunits: alpha(3), beta(3), gamma(1), delta(1), epsilon(1). CF(0) has three main subunits: a(1), b(2) and c(9-12). The alpha and beta chains form an alternating ring which encloses part of the gamma chain. CF(1) is attached to CF(0) by a central stalk formed by the gamma and epsilon chains, while a peripheral stalk is formed by the delta and b chains.

It is found in the cell inner membrane. The enzyme catalyses ATP + H2O + 4 H(+)(in) = ADP + phosphate + 5 H(+)(out). In terms of biological role, produces ATP from ADP in the presence of a proton gradient across the membrane. The catalytic sites are hosted primarily by the beta subunits. In Pelobacter propionicus (strain DSM 2379 / NBRC 103807 / OttBd1), this protein is ATP synthase subunit beta 2.